A 414-amino-acid polypeptide reads, in one-letter code: CCA-adding enzyme (414 aa).

Positions 8 and 11 each coordinate ATP. 2 residues coordinate CTP: G8 and R11. The Mg(2+) site is built by D21 and D23. ATP-binding residues include R92, R138, and R141. R92, R138, and R141 together coordinate CTP.

The protein belongs to the tRNA nucleotidyltransferase/poly(A) polymerase family. Bacterial CCA-adding enzyme type 2 subfamily. Mg(2+) serves as cofactor.

The enzyme catalyses a tRNA precursor + 2 CTP + ATP = a tRNA with a 3' CCA end + 3 diphosphate. It catalyses the reaction a tRNA with a 3' CCA end + 2 CTP + ATP = a tRNA with a 3' CCACCA end + 3 diphosphate. Functionally, catalyzes the addition and repair of the essential 3'-terminal CCA sequence in tRNAs without using a nucleic acid template. Adds these three nucleotides in the order of C, C, and A to the tRNA nucleotide-73, using CTP and ATP as substrates and producing inorganic pyrophosphate. tRNA 3'-terminal CCA addition is required both for tRNA processing and repair. Also involved in tRNA surveillance by mediating tandem CCA addition to generate a CCACCA at the 3' terminus of unstable tRNAs. While stable tRNAs receive only 3'-terminal CCA, unstable tRNAs are marked with CCACCA and rapidly degraded. The polypeptide is CCA-adding enzyme (Buchnera aphidicola subsp. Cinara cedri (strain Cc)).